The chain runs to 307 residues: Glycine--tRNA ligase alpha subunit (307 aa).

It belongs to the class-II aminoacyl-tRNA synthetase family. Tetramer of two alpha and two beta subunits.

It localises to the cytoplasm. It catalyses the reaction tRNA(Gly) + glycine + ATP = glycyl-tRNA(Gly) + AMP + diphosphate. The polypeptide is Glycine--tRNA ligase alpha subunit (Aeromonas salmonicida (strain A449)).